The primary structure comprises 633 residues: DNA mismatch repair protein MutL (633 aa).

This sequence belongs to the DNA mismatch repair MutL/HexB family.

In terms of biological role, this protein is involved in the repair of mismatches in DNA. It is required for dam-dependent methyl-directed DNA mismatch repair. May act as a 'molecular matchmaker', a protein that promotes the formation of a stable complex between two or more DNA-binding proteins in an ATP-dependent manner without itself being part of a final effector complex. This Macrococcus caseolyticus (strain JCSC5402) (Macrococcoides caseolyticum) protein is DNA mismatch repair protein MutL.